A 634-amino-acid polypeptide reads, in one-letter code: Polyadenylate-binding protein 1A (634 aa).

4 RRM domains span residues 11-89, 99-175, 191-268, and 294-370; these read ASLY…WSQR, GNIF…RFKS, TNVY…RAQK, and VNLY…LAQR. The region spanning 541-618 is the PABC domain; it reads QEPLTASMLA…AVAVLQAHQA (78 aa).

The protein belongs to the polyadenylate-binding protein type-1 family. Interacts with ybx1; interaction recruits pabpc1a on C5-methylcytosine (m5C)-containing mRNAs, preventing their degradation.

The protein localises to the cytoplasm. Binds the poly(A) tail of mRNA. Prevents mRNA deadenylation and confers poly(A) stability. Binds to N6-methyladenosine (m6A)-containing mRNAs. Stimulates the translation of mRNAs to which it is bound, acting, at least in part, with dazl. Involved in the maternal-to-zygotic transition in early embryo via interaction with ybx1: interaction recruits pabpc1a on C5-methylcytosine (m5C)-containing maternal mRNAs, preventing their degradation. In Danio rerio (Zebrafish), this protein is Polyadenylate-binding protein 1A.